A 240-amino-acid chain; its full sequence is Protein CDV3 homolog A (240 aa).

The span at 1-15 (MAEPQEKSLDDFFAK) shows a compositional bias: basic and acidic residues. Positions 1 to 204 (MAEPQEKSLD…TESRREKEME (204 aa)) are disordered. At A2 the chain carries N-acetylalanine. Low complexity predominate over residues 27–52 (SGSAAGSRGSARPPDGAPSSSSSMSG). Basic and acidic residues predominate over residues 57-73 (VKKEKSGKSDNPDQLQE). Polar residues-rich tracts occupy residues 127–141 (DKSSGPWNKTSQAQA) and 181–192 (SDTQFPSLQATA). Over residues 193–204 (KHTESRREKEME) the composition is skewed to basic and acidic residues.

It belongs to the CDV3 family.

It is found in the cytoplasm. The protein is Protein CDV3 homolog A (cdv3-a) of Xenopus laevis (African clawed frog).